We begin with the raw amino-acid sequence, 221 residues long: Ethylene-inducing xylanase 4 (221 aa).

An N-terminal signal peptide occupies residues 1–19 (MVSFSTLLTACTAITGALG). The 191-residue stretch at 28–218 (NVTPNAQGTH…SAGRASVVVE (191 aa)) folds into the GH11 domain. N96 carries an N-linked (GlcNAc...) asparagine glycan. E114 functions as the Nucleophile in the catalytic mechanism. E205 acts as the Proton donor in catalysis.

Belongs to the glycosyl hydrolase 11 (cellulase G) family.

The enzyme catalyses Endohydrolysis of (1-&gt;4)-beta-D-xylosidic linkages in xylans.. Its pathway is glycan degradation; xylan degradation. Its function is as follows. Endo-1,4-beta-xylanase involved in the hydrolysis of xylan, a major structural heterogeneous polysaccharide found in plant biomass representing the second most abundant polysaccharide in the biosphere, after cellulose. May act as an elicitor of plant defense responses in certain plants but does not exhibit any cell death when transiently expressed in N.benthamiana. This Verticillium dahliae (strain VdLs.17 / ATCC MYA-4575 / FGSC 10137) (Verticillium wilt) protein is Ethylene-inducing xylanase 4.